Here is a 269-residue protein sequence, read N- to C-terminus: Aegyptin-like protein (269 aa).

A signal peptide spans 1–19 (MKLLLLLASVLCLALIVSA). Residues 19–152 (ARPSDETTDQ…GGAEGGEESP (134 aa)) form a disordered region. Residues 38 to 148 (TSDSYHQEED…AGEEGGAEGG (111 aa)) are GE-rich region which mediates binding of Ca(2+). Composition is skewed to acidic residues over residues 56–73 (GTED…ESSS), 98–121 (GEED…EGGA), and 131–149 (GGAD…EGGE). Residues 148-269 (GEESPVNTYH…DCIVEKRDSE (122 aa)) form a mediates binding of host collagen and inhibition of platelet aggregation region. 2 disulfides stabilise this stretch: C208–C261 and C230–C239.

Belongs to the aegyptin family. In terms of tissue distribution, female saliva (at protein level). Distal lateral lobes of female salivary gland (at protein level). Low-level expression in male salivary gland. Not detected in female and male carcasses.

The protein resides in the secreted. Functionally, modulates blood feeding of female mosquitoes on vertebrate hosts. Inhibits collagen-induced platelet aggregation in the host via preventing collagen interaction with its ligands: glycoprotein VI and integrin alpha-2/beta-1 (ITGA2/ITGB1). Inhibits collagen-induced increase of Ca(2+) levels in host platelets. Binds to host collagens. Binds Ca(2+). Prevents a decrease in platelet count in the host blood after collagen injection. Its function is as follows. (Microbial infection) Does not affect the development of Plasmodium berghei parasites in mosquitoes. In Anopheles stephensi (Indo-Pakistan malaria mosquito), this protein is Aegyptin-like protein.